We begin with the raw amino-acid sequence, 523 residues long: GMP synthase [glutamine-hydrolyzing] (523 aa).

Positions Lys-8 to Asn-205 constitute a Glutamine amidotransferase type-1 domain. Catalysis depends on Cys-85, which acts as the Nucleophile. Catalysis depends on residues His-179 and Glu-181. The GMPS ATP-PPase domain maps to Trp-206–Arg-398. Residue Ser-233–Ser-239 participates in ATP binding.

Homodimer.

It catalyses the reaction XMP + L-glutamine + ATP + H2O = GMP + L-glutamate + AMP + diphosphate + 2 H(+). The protein operates within purine metabolism; GMP biosynthesis; GMP from XMP (L-Gln route): step 1/1. In terms of biological role, catalyzes the synthesis of GMP from XMP. The protein is GMP synthase [glutamine-hydrolyzing] of Actinobacillus succinogenes (strain ATCC 55618 / DSM 22257 / CCUG 43843 / 130Z).